Consider the following 537-residue polypeptide: MTFSEILDRVGSMGPFQYLHVTLLALPILGIANHNLLQIFTATTPDHHCRPPPNASLEPWVLPLGPNGKPEKCLRFVHLPNASLPNDTQGATEPCLDGWIYNSTRDTIVTEWDLVCGSNKLKEMAQSVFMAGILVGGPVFGELSDRFGRKPILTWSYLLLAASGSSAAFSPSLTVYMIFRFLCGCSISGISLSTIILNVEWVPTSTRAISSTTIGYCYTIGQFILPGLAYAVPQWRWLQLSVSAAFFIFSLLSWWVPESIRWLVLSGKFSKALKTLQRVATFNGKKEEGEKLTVEELKFNLQKDITSAKVKYGLSDLFRVSILRRVTFCLSLAWFATGFAYYSLAMGVEEFGVNIYILQIIFGGVDIPAKFITILSISYLGRRITQGFLLILAGVAILALIFVSSEMQLLRTALAVFGKGCLSGSFSCLFLYTSELYPTVLRQTGMGISNIWARVGSMIAPLVKITGELQPFIPNVIFGTMTLLGGSAAFFLLETLNRPLPETIEDIQDWYQQTKKTKQEPEAEKASQTIPLKTGGP.

At 1 to 11 (MTFSEILDRVG) the chain is on the cytoplasmic side. Phosphoserine is present on Ser-4. A helical transmembrane segment spans residues 12 to 32 (SMGPFQYLHVTLLALPILGIA). The Extracellular portion of the chain corresponds to 33–123 (NHNLLQIFTA…LVCGSNKLKE (91 aa)). Asn-81 carries an N-linked (GlcNAc...) asparagine glycan. Residues 124–144 (MAQSVFMAGILVGGPVFGELS) form a helical membrane-spanning segment. Residues 145-150 (DRFGRK) are Cytoplasmic-facing. The chain crosses the membrane as a helical span at residues 151-171 (PILTWSYLLLAASGSSAAFSP). Residues 172–176 (SLTVY) lie on the Extracellular side of the membrane. A helical transmembrane segment spans residues 177–197 (MIFRFLCGCSISGISLSTIIL). Residues 198–212 (NVEWVPTSTRAISST) lie on the Cytoplasmic side of the membrane. The helical transmembrane segment at 213-233 (TIGYCYTIGQFILPGLAYAVP) threads the bilayer. Over 234-236 (QWR) the chain is Extracellular. Residues 237–257 (WLQLSVSAAFFIFSLLSWWVP) traverse the membrane as a helical segment. The Cytoplasmic portion of the chain corresponds to 258 to 327 (ESIRWLVLSG…FRVSILRRVT (70 aa)). Residues 328–348 (FCLSLAWFATGFAYYSLAMGV) traverse the membrane as a helical segment. The Extracellular portion of the chain corresponds to 349-354 (EEFGVN). The chain crosses the membrane as a helical span at residues 355–375 (IYILQIIFGGVDIPAKFITIL). At 376 to 383 (SISYLGRR) the chain is on the cytoplasmic side. The helical transmembrane segment at 384–404 (ITQGFLLILAGVAILALIFVS) threads the bilayer. Residues 405 to 411 (SEMQLLR) are Extracellular-facing. The chain crosses the membrane as a helical span at residues 412–432 (TALAVFGKGCLSGSFSCLFLY). At 433–471 (TSELYPTVLRQTGMGISNIWARVGSMIAPLVKITGELQP) the chain is on the cytoplasmic side. The helical transmembrane segment at 472 to 492 (FIPNVIFGTMTLLGGSAAFFL) threads the bilayer. Topologically, residues 493–537 (LETLNRPLPETIEDIQDWYQQTKKTKQEPEAEKASQTIPLKTGGP) are extracellular. The interval 513–537 (QTKKTKQEPEAEKASQTIPLKTGGP) is disordered.

The protein belongs to the major facilitator (TC 2.A.1) superfamily. Organic cation transporter (TC 2.A.1.19) family. In terms of tissue distribution, expressed mainly in kidney. In kidney, detected in almost all parts of the nephron, including macula densa cells. Expressed (at protein level) throughout the renal cortex. Widely distributed in the brain with no large regional differences. Expressed in the choroid plexus (CP, located in the ventricles of the brain). Expressed in developing bone. Weakly expressed in brain and eye.

The protein resides in the basolateral cell membrane. It catalyses the reaction estrone 3-sulfate(out) + glutarate(in) = estrone 3-sulfate(in) + glutarate(out). It carries out the reaction estrone 3-sulfate(in) + 2-oxoglutarate(out) = estrone 3-sulfate(out) + 2-oxoglutarate(in). The catalysed reaction is taurocholate(out) + glutarate(in) = taurocholate(in) + glutarate(out). The enzyme catalyses dehydroepiandrosterone 3-sulfate(out) + glutarate(in) = dehydroepiandrosterone 3-sulfate(in) + glutarate(out). It catalyses the reaction glutarate(in) + 2-oxoglutarate(out) = glutarate(out) + 2-oxoglutarate(in). It carries out the reaction urate(in) + 2-oxoglutarate(out) = urate(out) + 2-oxoglutarate(in). The catalysed reaction is prostaglandin F2alpha(out) + glutarate(in) = prostaglandin F2alpha(in) + glutarate(out). The enzyme catalyses prostaglandin F2alpha(out) + 2-oxoglutarate(in) = prostaglandin F2alpha(in) + 2-oxoglutarate(out). It catalyses the reaction (R)-carnitine(out) + 2-oxoglutarate(in) = (R)-carnitine(in) + 2-oxoglutarate(out). It carries out the reaction glutarate(in) + (R)-carnitine(out) = glutarate(out) + (R)-carnitine(in). The catalysed reaction is prostaglandin E2(out) + 2-oxoglutarate(in) = prostaglandin E2(in) + 2-oxoglutarate(out). The enzyme catalyses prostaglandin E2(out) + glutarate(in) = prostaglandin E2(in) + glutarate(out). It catalyses the reaction urate(in) + glutarate(out) = urate(out) + glutarate(in). It carries out the reaction taurocholate(out) + 2-oxoglutarate(in) = taurocholate(in) + 2-oxoglutarate(out). The catalysed reaction is dehydroepiandrosterone 3-sulfate(out) + 2-oxoglutarate(in) = dehydroepiandrosterone 3-sulfate(in) + 2-oxoglutarate(out). The enzyme catalyses kynurenate(out) + a dicarboxylate(in) = kynurenate(in) + a dicarboxylate(out). It catalyses the reaction (indol-3-yl)acetate(out) + a dicarboxylate(in) = (indol-3-yl)acetate(in) + a dicarboxylate(out). It carries out the reaction indoxyl sulfate(out) + a dicarboxylate(in) = indoxyl sulfate(in) + a dicarboxylate(out). The catalysed reaction is N-benzoylglycine(out) + a dicarboxylate(in) = N-benzoylglycine(in) + a dicarboxylate(out). The enzyme catalyses 3-carboxy-4-methyl-5-propyl-2-furanpropanoate(out) + a dicarboxylate(in) = 3-carboxy-4-methyl-5-propyl-2-furanpropanoate(in) + a dicarboxylate(out). It catalyses the reaction (6R)-L-erythro-5,6,7,8-tetrahydrobiopterin(out) + a dicarboxylate(in) = (6R)-L-erythro-5,6,7,8-tetrahydrobiopterin(in) + a dicarboxylate(out). It carries out the reaction L-erythro-7,8-dihydrobiopterin(out) + a dicarboxylate(in) = L-erythro-7,8-dihydrobiopterin(in) + a dicarboxylate(out). The catalysed reaction is L-sepiapterin(out) + a dicarboxylate(in) = L-sepiapterin(in) + a dicarboxylate(out). With respect to regulation, expression inhibited by androgens such as testosterone. Functions as an organic anion/dicarboxylate exchanger that couples organic anion uptake indirectly to the sodium gradient. Transports organic anions such as estrone 3-sulfate (E1S) and urate in exchange for dicarboxylates such as glutarate or ketoglutarate (2-oxoglutarate). Plays an important role in the excretion of endogenous and exogenous organic anions, especially from the kidney and the brain. E1S transport is pH- and chloride-dependent and may also involve E1S/cGMP exchange. Responsible for the transport of prostaglandin E2 (PGE2) and prostaglandin F2(alpha) (PGF2(alpha)) in the basolateral side of the renal tubule. Involved in the transport of neuroactive tryptophan metabolites kynurenate and xanthurenate. Functions as a biopterin transporters involved in the uptake and the secretion of coenzymes tetrahydrobiopterin (BH4), dihydrobiopterin (BH2) and sepiapterin to urine, thereby determining baseline levels of blood biopterins. May be involved in the basolateral transport of steviol, a metabolite of the popular sugar substitute stevioside. May participate in the detoxification/ renal excretion of drugs and xenobiotics, such as the histamine H(2)-receptor antagonists fexofenadine and cimetidine, the antibiotic benzylpenicillin (PCG), the anionic herbicide 2,4-dichloro-phenoxyacetate (2,4-D), the diagnostic agent p-aminohippurate (PAH), the antiviral acyclovir (ACV), and the mycotoxin ochratoxin (OTA), by transporting these exogenous organic anions across the cell membrane in exchange for dicarboxylates such as 2-oxoglutarate. May contribute to the release of cortisol in the adrenals. Involved in one of the detoxification systems on the choroid plexus (CP), removes substrates such as E1S or taurocholate (TC), PCG, 2,4-D and PAH, from the cerebrospinal fluid (CSF) to the blood for eventual excretion in urine and bile. Also contributes to the uptake of several other organic compounds such as the prostanoids prostaglandin E(2) and prostaglandin F(2-alpha), L-carnitine, and the therapeutic drugs allopurinol, 6-mercaptopurine (6-MP) and 5-fluorouracil (5-FU). Mediates the transport of PAH, PCG, and the statins pravastatin and pitavastatin, from the cerebrum into the blood circulation across the blood-brain barrier (BBB). Contributes to the renal uptake of potent uremic toxins (indoxyl sulfate (IS), indole acetate (IA), hippurate/N-benzoylglycine (HA) and 3-carboxy-4-methyl-5-propyl-2-furanpropionate (CMPF)), pravastatin, PCG, E1S and dehydroepiandrosterone sulfate (DHEAS), and is partly involved in the renal uptake of temocaprilat (an angiotensin-converting enzyme (ACE) inhibitor). In summary, plays a role in the efflux of drugs and xenobiotics, helping reduce their undesired toxicological effects on the body. In Mus musculus (Mouse), this protein is Organic anion transporter 3 (Slc22a8).